A 142-amino-acid polypeptide reads, in one-letter code: Lipoprotein MlpI (142 aa).

Positions 1–17 (MKIINILFCLFLLMLNS) are cleaved as a signal peptide. Cysteine 18 is lipidated: N-palmitoyl cysteine. The S-diacylglycerol cysteine moiety is linked to residue cysteine 18. A disordered region spans residues 22–54 (DTNTSQTKSRQKRDLTQKEATQEKPKSKEDLLR). A compositionally biased stretch (basic and acidic residues) spans 33 to 54 (KRDLTQKEATQEKPKSKEDLLR).

The protein belongs to the Multicopy lipoprotein (Mlp) family.

Its subcellular location is the cell outer membrane. An outer membrane protein that may participate in pathogenesis. Some human Lyme disease patients have antibodies against this protein. The Mlp proteins probably undergo intragenic recombination, generating new alleles. This is Lipoprotein MlpI from Borreliella burgdorferi (strain ATCC 35210 / DSM 4680 / CIP 102532 / B31) (Borrelia burgdorferi).